Consider the following 358-residue polypeptide: Stearoyl-CoA desaturase 2 (358 aa).

The Cytoplasmic segment spans residues 1–71; it reads MPAHILQEIS…EGPPPKLEYV (71 aa). Residues 16-39 form a disordered region; it reads TTTITAPPSGGQQNGGEKFEKSSH. The helical transmembrane segment at 72–92 threads the bilayer; the sequence is WRNIILMALLHLGALYGITLV. N74 is a binding site for substrate. Residues 93–96 lie on the Lumenal side of the membrane; that stretch reads PSCK. A helical membrane pass occupies residues 97–117; that stretch reads LYTCLFAYLYYVISALGITAG. The Cytoplasmic portion of the chain corresponds to 118-216; that stretch reads AHRLWSHRTY…EKLVMFQRRY (99 aa). Residues H119 and H124 each coordinate Fe cation. A Histidine box-1 motif is present at residues 119–124; the sequence is HRLWSH. 3 residues coordinate substrate: N147, R154, and D155. Fe cation is bound by residues H156, H159, and H160. The Histidine box-2 motif lies at 156–160; it reads HRAHH. Positions 187 and 188 each coordinate substrate. A helical membrane pass occupies residues 217-236; sequence YKPGLLLMCFVLPTLVPWYC. At 237–240 the chain is on the lumenal side; the sequence is WGET. Residues 241-262 traverse the membrane as a helical segment; it reads FVNSLCVSTFLRYAVVLNATWL. W261 contributes to the substrate binding site. Residues 263–358 are Cytoplasmic-facing; the sequence is VNSAAHLYGY…RTGDGSCKSG (96 aa). The Fe cation site is built by H268, H297, H300, and H301. The short motif at 297-301 is the Histidine box-3 element; the sequence is HNYHH.

It belongs to the fatty acid desaturase type 1 family. Requires Fe(2+) as cofactor. In terms of tissue distribution, detected in brain and skin. Highly expressed in brain, and detected at low levels in heart, stomach, lung and testis. Detected both in dermis and epidermis.

Its subcellular location is the endoplasmic reticulum membrane. The protein localises to the microsome membrane. The catalysed reaction is octadecanoyl-CoA + 2 Fe(II)-[cytochrome b5] + O2 + 2 H(+) = (9Z)-octadecenoyl-CoA + 2 Fe(III)-[cytochrome b5] + 2 H2O. The enzyme catalyses hexadecanoyl-CoA + 2 Fe(II)-[cytochrome b5] + O2 + 2 H(+) = (9Z)-hexadecenoyl-CoA + 2 Fe(III)-[cytochrome b5] + 2 H2O. In terms of biological role, stearoyl-CoA desaturase that utilizes O(2) and electrons from reduced cytochrome b5 to introduce the first double bond into saturated fatty acyl-CoA substrates. Catalyzes the insertion of a cis double bond at the delta-9 position into fatty acyl-CoA substrates including palmitoyl-CoA and stearoyl-CoA. Gives rise to a mixture of 16:1 and 18:1 unsaturated fatty acids. Contributes to the biosynthesis of membrane phospholipids, cholesterol esters and triglycerides, especially during embryonic development and in neonates. Important for normal permeability barrier function of the skin in neonates. The polypeptide is Stearoyl-CoA desaturase 2 (Scd2) (Mus musculus (Mouse)).